The chain runs to 63 residues: Large ribosomal subunit protein uL29 (63 aa).

Belongs to the universal ribosomal protein uL29 family.

The polypeptide is Large ribosomal subunit protein uL29 (Flavobacterium psychrophilum (strain ATCC 49511 / DSM 21280 / CIP 103535 / JIP02/86)).